The sequence spans 798 residues: Translation initiation factor IF-2 (798 aa).

Residues 40–207 (SEQETKLRQA…QQESAKPAVP (168 aa)) form a disordered region. Low complexity predominate over residues 57–186 (NTQSKATNNQ…RNNFNNQNRN (130 aa)). A compositionally biased stretch (basic residues) spans 187-196 (RFNKKGKKGK). The region spanning 300–469 (TRPPVVTIMG…LLIAEVEDLK (170 aa)) is the tr-type G domain. Positions 309–316 (GHVDHGKT) are G1. 309 to 316 (GHVDHGKT) provides a ligand contact to GTP. The interval 334–338 (GITQH) is G2. A G3 region spans residues 355 to 358 (DTPG). Residues 355–359 (DTPGH) and 409–412 (NKID) contribute to the GTP site. The G4 stretch occupies residues 409–412 (NKID). A G5 region spans residues 445-447 (SAK).

This sequence belongs to the TRAFAC class translation factor GTPase superfamily. Classic translation factor GTPase family. IF-2 subfamily.

It localises to the cytoplasm. One of the essential components for the initiation of protein synthesis. Protects formylmethionyl-tRNA from spontaneous hydrolysis and promotes its binding to the 30S ribosomal subunits. Also involved in the hydrolysis of GTP during the formation of the 70S ribosomal complex. This Enterococcus faecalis (strain ATCC 700802 / V583) protein is Translation initiation factor IF-2.